The chain runs to 505 residues: Protein nucleotidyltransferase YdiU (505 aa).

ATP is bound by residues G102, G104, R105, K125, D137, G138, R188, and R195. D264 functions as the Proton acceptor in the catalytic mechanism. Mg(2+)-binding residues include N265 and D274. D274 is an ATP binding site.

The protein belongs to the SELO family. The cofactor is Mg(2+). Mn(2+) serves as cofactor.

The catalysed reaction is L-seryl-[protein] + ATP = 3-O-(5'-adenylyl)-L-seryl-[protein] + diphosphate. It carries out the reaction L-threonyl-[protein] + ATP = 3-O-(5'-adenylyl)-L-threonyl-[protein] + diphosphate. The enzyme catalyses L-tyrosyl-[protein] + ATP = O-(5'-adenylyl)-L-tyrosyl-[protein] + diphosphate. It catalyses the reaction L-histidyl-[protein] + UTP = N(tele)-(5'-uridylyl)-L-histidyl-[protein] + diphosphate. The catalysed reaction is L-seryl-[protein] + UTP = O-(5'-uridylyl)-L-seryl-[protein] + diphosphate. It carries out the reaction L-tyrosyl-[protein] + UTP = O-(5'-uridylyl)-L-tyrosyl-[protein] + diphosphate. Functionally, nucleotidyltransferase involved in the post-translational modification of proteins. It can catalyze the addition of adenosine monophosphate (AMP) or uridine monophosphate (UMP) to a protein, resulting in modifications known as AMPylation and UMPylation. The chain is Protein nucleotidyltransferase YdiU from Nitrobacter winogradskyi (strain ATCC 25391 / DSM 10237 / CIP 104748 / NCIMB 11846 / Nb-255).